The chain runs to 256 residues: Triosephosphate isomerase (256 aa).

9-11 (NWK) is a substrate binding site. The Electrophile role is filled by His-96. Glu-168 acts as the Proton acceptor in catalysis. Substrate-binding positions include Ser-213 and 234–235 (GG).

The protein belongs to the triosephosphate isomerase family. As to quaternary structure, homodimer.

It is found in the cytoplasm. It catalyses the reaction D-glyceraldehyde 3-phosphate = dihydroxyacetone phosphate. It participates in carbohydrate biosynthesis; gluconeogenesis. The protein operates within carbohydrate degradation; glycolysis; D-glyceraldehyde 3-phosphate from glycerone phosphate: step 1/1. Its function is as follows. Involved in the gluconeogenesis. Catalyzes stereospecifically the conversion of dihydroxyacetone phosphate (DHAP) to D-glyceraldehyde-3-phosphate (G3P). This is Triosephosphate isomerase from Baumannia cicadellinicola subsp. Homalodisca coagulata.